The primary structure comprises 127 residues: Aspartate 1-decarboxylase (127 aa).

Catalysis depends on serine 25, which acts as the Schiff-base intermediate with substrate; via pyruvic acid. Serine 25 is subject to Pyruvic acid (Ser). Position 57 (threonine 57) interacts with substrate. The Proton donor role is filled by tyrosine 58. 73–75 (GAA) lines the substrate pocket.

This sequence belongs to the PanD family. Heterooctamer of four alpha and four beta subunits. It depends on pyruvate as a cofactor. Post-translationally, is synthesized initially as an inactive proenzyme, which is activated by self-cleavage at a specific serine bond to produce a beta-subunit with a hydroxyl group at its C-terminus and an alpha-subunit with a pyruvoyl group at its N-terminus.

The protein localises to the cytoplasm. It carries out the reaction L-aspartate + H(+) = beta-alanine + CO2. The protein operates within cofactor biosynthesis; (R)-pantothenate biosynthesis; beta-alanine from L-aspartate: step 1/1. In terms of biological role, catalyzes the pyruvoyl-dependent decarboxylation of aspartate to produce beta-alanine. In Clostridium botulinum (strain 657 / Type Ba4), this protein is Aspartate 1-decarboxylase.